We begin with the raw amino-acid sequence, 61 residues long: Small ribosomal subunit protein uS14B (61 aa).

Positions 24, 27, 40, and 43 each coordinate Zn(2+).

It belongs to the universal ribosomal protein uS14 family. Zinc-binding uS14 subfamily. As to quaternary structure, part of the 30S ribosomal subunit. Contacts proteins S3 and S10. Zn(2+) is required as a cofactor.

Functionally, binds 16S rRNA, required for the assembly of 30S particles and may also be responsible for determining the conformation of the 16S rRNA at the A site. This is Small ribosomal subunit protein uS14B from Ligilactobacillus salivarius (strain UCC118) (Lactobacillus salivarius).